A 443-amino-acid chain; its full sequence is Thymidine phosphorylase (443 aa).

Belongs to the thymidine/pyrimidine-nucleoside phosphorylase family. Homodimer.

It carries out the reaction thymidine + phosphate = 2-deoxy-alpha-D-ribose 1-phosphate + thymine. Its pathway is pyrimidine metabolism; dTMP biosynthesis via salvage pathway; dTMP from thymine: step 1/2. Functionally, the enzymes which catalyze the reversible phosphorolysis of pyrimidine nucleosides are involved in the degradation of these compounds and in their utilization as carbon and energy sources, or in the rescue of pyrimidine bases for nucleotide synthesis. This chain is Thymidine phosphorylase, found in Shewanella amazonensis (strain ATCC BAA-1098 / SB2B).